A 599-amino-acid chain; its full sequence is Beta-glucuronidase (599 aa).

D-glucuronate contacts are provided by Asp160 and Asn407. The Proton donor role is filled by Glu408. 5 residues coordinate D-glucuronate: Asn462, Tyr468, Glu501, Trp546, and Lys565. Residue Glu501 is the Nucleophile of the active site. The N-K motif motif lies at 563 to 565; that stretch reads NHK.

It belongs to the glycosyl hydrolase 2 family.

The catalysed reaction is a beta-D-glucuronoside + H2O = D-glucuronate + an alcohol. Its activity is regulated as follows. Inhibited by a set of synthetic compounds like thio-urea derivatives and analogs. Inhibitors of gut microbial beta-glucuronidases are expected to block the reactivation of glucuronidated cancer drugs, and to alleviate drug-induced GI toxicity. Its function is as follows. Displays beta-glucuronidase activity with the artificial substrate p-nitrophenyl-beta-D-glucuronide (PNPG). Is likely capable of scavenging glucuronate from a range of chemically distinct xenobiotic and endobiotic glucuronides present in the gastrointestinal (GI) tract, to be able to utilize these diverse sources of carbon. As part of the GI microbiome, this enzyme would be able to reactivate glucuronide drug conjugates, such reactivated compounds can significantly damage the GI tract. The sequence is that of Beta-glucuronidase from Streptococcus agalactiae serotype V (strain ATCC BAA-611 / 2603 V/R).